We begin with the raw amino-acid sequence, 822 residues long: LPS-assembly protein LptD (822 aa).

Positions Met1–Ala37 are cleaved as a signal peptide. Residues Gln38–Val97 form a disordered region.

The protein belongs to the LptD family. In terms of assembly, component of the lipopolysaccharide transport and assembly complex. Interacts with LptE and LptA.

Its subcellular location is the cell outer membrane. In terms of biological role, together with LptE, is involved in the assembly of lipopolysaccharide (LPS) at the surface of the outer membrane. This chain is LPS-assembly protein LptD, found in Polaromonas sp. (strain JS666 / ATCC BAA-500).